The sequence spans 273 residues: SPRY domain-containing SOCS box protein 1 (273 aa).

Tyr-31 carries the phosphotyrosine; by MET modification. One can recognise a B30.2/SPRY domain in the interval 33–231 (KPTRLDLLLD…IRMRYLNGLD (199 aa)). The region spanning 232 to 273 (PEPLPLMDLCRRSVRLALGRERLGEIHTLPLPASLKAYLLYQ) is the SOCS box domain.

It belongs to the SPSB family. In terms of assembly, component of the probable ECS(SPSB1) E3 ubiquitin-protein ligase complex which contains CUL5, RNF7/RBX2, Elongin BC complex and SPSB1. Interacts with CUL5, RNF7, ELOB and ELOC. Directly interacts with MET tyrosine kinase domain in the presence and in the absence of HGF, however HGF treatment has a positive effect on this interaction. When phosphorylated, interacts with RASA1 without affecting its stability. Interacts (via B30.2/SPRY domain) with PAWR; this interaction is direct and occurs in association with the Elongin BC complex. Interacts with NOS2. Interacts with EPHB2.

The protein resides in the cytoplasm. Its subcellular location is the cytosol. It functions in the pathway protein modification; protein ubiquitination. Its function is as follows. Substrate recognition component of a SCF-like ECS (Elongin BC-CUL2/5-SOCS-box protein) E3 ubiquitin-protein ligase complex which mediates the ubiquitination and subsequent proteasomal degradation of target proteins. Negatively regulates nitric oxide (NO) production and limits cellular toxicity in activated macrophages by mediating the ubiquitination and proteasomal degradation of NOS2. Acts as a bridge which links NOS2 with the ECS E3 ubiquitin ligase complex components ELOC and CUL5. This Homo sapiens (Human) protein is SPRY domain-containing SOCS box protein 1 (SPSB1).